Reading from the N-terminus, the 294-residue chain is MNILENINTEKRNPRSLHLDSMSIAEAVSLMIDEEYGVIEALKEQHRNITEVILATSYSLKNGGRIVYIGAGTSGRLGILDAVECPPTFSVDYNTIVGLIAGGEKAFIQAQEGAEDDANFGKEDLQSINLTAKDIVVGIAASGRTPYVIGALEYANSIGATTVAISCTKQAKISKYAKYSIEAVPGPEVLTGSTRLKAGTTQKLILNMISTLSMVSVGKVYQNLMVDVKPTNQKLIERSKNIICEATGVDYTTAEKFYLKANKSVKVAIVMILNDCDYEKALAILKNNNNFIKS.

The SIS domain maps to 56–219 (TSYSLKNGGR…STLSMVSVGK (164 aa)). Glu-84 (proton donor) is an active-site residue. Glu-115 is a catalytic residue.

It belongs to the GCKR-like family. MurNAc-6-P etherase subfamily. In terms of assembly, homodimer.

It carries out the reaction N-acetyl-D-muramate 6-phosphate + H2O = N-acetyl-D-glucosamine 6-phosphate + (R)-lactate. Its pathway is amino-sugar metabolism; 1,6-anhydro-N-acetylmuramate degradation. It functions in the pathway amino-sugar metabolism; N-acetylmuramate degradation. It participates in cell wall biogenesis; peptidoglycan recycling. Functionally, specifically catalyzes the cleavage of the D-lactyl ether substituent of MurNAc 6-phosphate, producing GlcNAc 6-phosphate and D-lactate. Together with AnmK, is also required for the utilization of anhydro-N-acetylmuramic acid (anhMurNAc) either imported from the medium or derived from its own cell wall murein, and thus plays a role in cell wall recycling. In Francisella tularensis subsp. novicida (strain U112), this protein is N-acetylmuramic acid 6-phosphate etherase.